Reading from the N-terminus, the 22-residue chain is Leptoglycin (22 aa).

The segment at 1-22 (GLLGGLLGPLLGGGGGGGGGLL) is disordered.

As to expression, expressed by the skin glands.

It is found in the secreted. In terms of biological role, antimicrobial protein. Has antibacterial activity against the Gram-negative bacteria E.coli ATCC 28922 (MIC=50 uM), P.aeruginosa ATCC 9027 (MIC=8 uM) and C.freundii ATCC 8090 (MIC=75 uM). Does not have hemolytic activity. This is Leptoglycin from Leptodactylus pentadactylus (Smokey jungle frog).